Reading from the N-terminus, the 456-residue chain is MAFAETNPAASSLPNGDCGRPRARPGGNRVTVVLGAQWGDEGKGKVVDLLAQDADIVCRCQGGNNAGHTVVVDSVEYDFHLLPSGIINPNVTAFIGNGVVIHLPGLFEEAEKNVQKGKGLEGWEKRLIISDRAHIVFDFHQAADGIQEQQRQEQAGKNLGTTKKGIGPVYSSKAARSGLRMCDLVSDFDGFSERFKVLANQYKSIYPTLEIDIEGELQKLKGYMERIKPMVRDGVYFLYEALHGPPKKILVEGANAALLDIDFGTYPFVTSSNCTVGGVCTGLGMPPQNVGEVYGVVKAYTTRVGIGAFPTEQDNEIGELLQTRGREFGVTTGRKRRCGWLDLVLLKYAHMINGFTALALTKLDILDMFTEIKVGVAYKLDGEIIPHFPANQEVLNKVEVQYKTLPGWNTDISNARTFKELPVNAQNYVRFIEDELQIPVKWIGVGKSRESMIQLF.

Positions 1 to 24 (MAFAETNPAASSLPNGDCGRPRAR) are disordered. GTP contacts are provided by residues 39–45 (GDEGKGK) and 67–69 (GHT). Asp40 acts as the Proton acceptor in catalysis. 2 residues coordinate Mg(2+): Asp40 and Gly67. Asp40 is a binding site for substrate. Residues 40–43 (DEGK), 65–68 (NAGH), Thr162, Arg176, Asn255, Thr270, and Arg334 contribute to the IMP site. The active-site Proton donor is His68. Residue 330–336 (VTTGRKR) participates in substrate binding. GTP is bound by residues Arg336, 362-364 (KLD), and 444-447 (GVGK).

Belongs to the adenylosuccinate synthetase family. Homodimer. The cofactor is Mg(2+). In terms of tissue distribution, widely expressed.

The protein localises to the cytoplasm. It localises to the mitochondrion. The catalysed reaction is IMP + L-aspartate + GTP = N(6)-(1,2-dicarboxyethyl)-AMP + GDP + phosphate + 2 H(+). Its pathway is purine metabolism; AMP biosynthesis via de novo pathway; AMP from IMP: step 1/2. With respect to regulation, inhibited competitively by AMP and IMP and non-competitively by fructose 1,6-bisphosphate. In terms of biological role, plays an important role in the de novo pathway and in the salvage pathway of purine nucleotide biosynthesis. Catalyzes the first committed step in the biosynthesis of AMP from IMP. The sequence is that of Adenylosuccinate synthetase isozyme 2 from Sus scrofa (Pig).